A 140-amino-acid polypeptide reads, in one-letter code: Large ribosomal subunit protein uL14 (140 aa).

It belongs to the universal ribosomal protein uL14 family. In terms of assembly, part of the 50S ribosomal subunit. Forms a cluster with proteins L3 and L24e, part of which may contact the 16S rRNA in 2 intersubunit bridges.

Binds to 23S rRNA. Forms part of two intersubunit bridges in the 70S ribosome. The polypeptide is Large ribosomal subunit protein uL14 (Nitrosopumilus maritimus (strain SCM1)).